A 363-amino-acid polypeptide reads, in one-letter code: 3-isopropylmalate dehydrogenase (363 aa).

79–92 (GPKWEHLPPNEQPE) is a binding site for NAD(+). 4 residues coordinate substrate: arginine 100, arginine 110, arginine 139, and aspartate 228. Residues aspartate 228, aspartate 252, and aspartate 256 each contribute to the Mg(2+) site. Position 286-298 (286-298 (GSAPDIAGKNIAN)) interacts with NAD(+).

Belongs to the isocitrate and isopropylmalate dehydrogenases family. LeuB type 1 subfamily. In terms of assembly, homodimer. The cofactor is Mg(2+). Requires Mn(2+) as cofactor.

It localises to the cytoplasm. The enzyme catalyses (2R,3S)-3-isopropylmalate + NAD(+) = 4-methyl-2-oxopentanoate + CO2 + NADH. It functions in the pathway amino-acid biosynthesis; L-leucine biosynthesis; L-leucine from 3-methyl-2-oxobutanoate: step 3/4. Functionally, catalyzes the oxidation of 3-carboxy-2-hydroxy-4-methylpentanoate (3-isopropylmalate) to 3-carboxy-4-methyl-2-oxopentanoate. The product decarboxylates to 4-methyl-2 oxopentanoate. The protein is 3-isopropylmalate dehydrogenase of Vibrio cholerae serotype O1 (strain ATCC 39315 / El Tor Inaba N16961).